Consider the following 41-residue polypeptide: Perlinhibin (41 aa).

Contains four disulfide bonds.

Its function is as follows. Binds to calcite crystals in the shell and inhibits further shell growth at the binding site. This is Perlinhibin from Haliotis laevigata (Smooth Australian abalone).